Reading from the N-terminus, the 47-residue chain is PhoP/PhoQ regulator MgrB (47 aa).

Residues 6-26 (WVILIIVLIACVILWTQTINV) traverse the membrane as a helical segment.

The protein belongs to the MgrB family. As to quaternary structure, may form homooligomers. Probably interacts with the periplasmic domain of PhoQ.

It localises to the cell inner membrane. Its function is as follows. PhoP-regulated transcription is redox-sensitive, being activated when the periplasm becomes more reducing. MgrB acts between DsbA/DsbB and PhoP/PhoQ in this pathway. Represses PhoP/PhoQ signaling, possibly by binding to the periplasmic domain of PhoQ, altering its activity and that of downstream effector PhoP. The polypeptide is PhoP/PhoQ regulator MgrB (Enterobacter sp. (strain 638)).